The following is a 415-amino-acid chain: Queuine tRNA-ribosyltransferase accessory subunit 2 (415 aa).

Cys351, Cys353, Cys356, and His382 together coordinate Zn(2+).

This sequence belongs to the queuine tRNA-ribosyltransferase family. QTRT2 subfamily. As to quaternary structure, heterodimer of a catalytic subunit QTRT1 and an accessory subunit QTRT2. It depends on Zn(2+) as a cofactor.

The protein localises to the cytoplasm. The protein resides in the mitochondrion outer membrane. Its function is as follows. Non-catalytic subunit of the queuine tRNA-ribosyltransferase (TGT) that catalyzes the base-exchange of a guanine (G) residue with queuine (Q) at position 34 (anticodon wobble position) in tRNAs with GU(N) anticodons (tRNA-Asp, -Asn, -His and -Tyr), resulting in the hypermodified nucleoside queuosine (7-(((4,5-cis-dihydroxy-2-cyclopenten-1-yl)amino)methyl)-7-deazaguanosine). In Homo sapiens (Human), this protein is Queuine tRNA-ribosyltransferase accessory subunit 2.